A 431-amino-acid chain; its full sequence is Enolase (431 aa).

(2R)-2-phosphoglycerate is bound at residue Q175. E217 functions as the Proton donor in the catalytic mechanism. Residues D254, E295, and D322 each coordinate Mg(2+). Positions 347, 376, 377, and 398 each coordinate (2R)-2-phosphoglycerate. Catalysis depends on K347, which acts as the Proton acceptor.

The protein belongs to the enolase family. The cofactor is Mg(2+).

Its subcellular location is the cytoplasm. The protein resides in the secreted. It is found in the cell surface. The catalysed reaction is (2R)-2-phosphoglycerate = phosphoenolpyruvate + H2O. Its pathway is carbohydrate degradation; glycolysis; pyruvate from D-glyceraldehyde 3-phosphate: step 4/5. Functionally, catalyzes the reversible conversion of 2-phosphoglycerate (2-PG) into phosphoenolpyruvate (PEP). It is essential for the degradation of carbohydrates via glycolysis. The protein is Enolase of Anaplasma marginale (strain St. Maries).